Reading from the N-terminus, the 314-residue chain is NAC domain-containing protein 10 (314 aa).

Residues 18 to 39 (VSNTDHPSVQLKDQSQSCVTSR) show a composition bias toward polar residues. Disordered stretches follow at residues 18-48 (VSNT…SAET) and 150-182 (YTTG…PVLS). The NAC domain maps to 77–236 (LPAGVKFDPS…EPVLSKVFYQ (160 aa)). The segment covering 160 to 171 (VSTDEEGHETRW) has biased composition (basic and acidic residues). The DNA-binding element occupies 187–242 (TGFKKILVLYTNYGRQKKPEKTNWVMHQYHLGSSEDEKDGEPVLSKVFYQTQPRQC).

Expressed in protoxylem and elongating interfascicular fiber cells of elongating internodes, developing metaxylem cells and interfascicular fibers of non-elongating internodes and developing secondary xylem of roots.

Its subcellular location is the nucleus. In terms of biological role, transcriptional activator that plays a regulatory role in the development of secondary cell wall fibers. Is a direct target of SND1. This chain is NAC domain-containing protein 10, found in Arabidopsis thaliana (Mouse-ear cress).